A 78-amino-acid chain; its full sequence is DNA-directed RNA polymerase subunit Rpo5 (78 aa).

It belongs to the archaeal Rpo5/eukaryotic RPB5 RNA polymerase subunit family. Part of the RNA polymerase complex.

It is found in the cytoplasm. It catalyses the reaction RNA(n) + a ribonucleoside 5'-triphosphate = RNA(n+1) + diphosphate. In terms of biological role, DNA-dependent RNA polymerase (RNAP) catalyzes the transcription of DNA into RNA using the four ribonucleoside triphosphates as substrates. This is DNA-directed RNA polymerase subunit Rpo5 from Methanococcus maripaludis (strain C6 / ATCC BAA-1332).